We begin with the raw amino-acid sequence, 714 residues long: Fumarate reductase flavoprotein subunit (714 aa).

Residues 13-16 (GGLA), 42-44 (SHS), and 49-50 (GG) each bind FAD. His-43 carries the tele-8alpha-FAD histidine modification. Catalysis depends on residues His-257 and Arg-273. FAD is bound by residues Glu-420 and 436 to 437 (SV).

This sequence belongs to the FAD-dependent oxidoreductase 2 family. FRD/SDH subfamily. In terms of assembly, part of an enzyme complex containing three subunits: a flavoprotein (frdA), an iron-sulfur protein (frdB), and diheme cytochrome b (frdC). The cofactor is FAD.

Its subcellular location is the cell inner membrane. It catalyses the reaction a quinone + succinate = fumarate + a quinol. Its function is as follows. The fumarate reductase enzyme complex is required for fumarate respiration. In Helicobacter pylori (strain ATCC 700392 / 26695) (Campylobacter pylori), this protein is Fumarate reductase flavoprotein subunit (frdA).